The primary structure comprises 277 residues: MTQQLQQIIDAAWEDRANISSSAAPAEVRDAVEHVISELNNGKLRVATRESVGQWTVHQWIKKAVLLSFRLKDNEQMQAGSLGFYDKVPTKFSHLSANELKESGVRIVPPAVARRGSYIAKGAILMPSYVNIGAYVGEGTMVDTWATVGSCAQIGANVHLSGGVGIGGVLEPLQAGPTIIEDNCFIGARSEVVEGVVIEENSVLGMGVYIGQSTPIFNRDTGETSFGRVPSGSVVISGNLPKKTKSGQEYSTYAAIIVKTVDAQTRSKTSLNDLLRD.

The substrate site is built by Arg106 and Asp143.

Belongs to the transferase hexapeptide repeat family. In terms of assembly, homotrimer.

It is found in the cytoplasm. It catalyses the reaction (S)-2,3,4,5-tetrahydrodipicolinate + succinyl-CoA + H2O = (S)-2-succinylamino-6-oxoheptanedioate + CoA. It participates in amino-acid biosynthesis; L-lysine biosynthesis via DAP pathway; LL-2,6-diaminopimelate from (S)-tetrahydrodipicolinate (succinylase route): step 1/3. The sequence is that of 2,3,4,5-tetrahydropyridine-2,6-dicarboxylate N-succinyltransferase from Variovorax paradoxus (strain S110).